A 620-amino-acid chain; its full sequence is Probable potassium transport system protein Kup 2 (620 aa).

12 helical membrane passes run 10 to 30 (LLVS…LYAL), 50 to 70 (VLSL…VIVI), 102 to 122 (MMLG…TPAI), 136 to 156 (PDLR…LFAI), 168 to 188 (FGPV…VNVI), 211 to 231 (LMSF…EALY), 246 to 266 (WFCL…ALLI), 284 to 304 (MVVP…QAVI), 336 to 356 (IYVP…VVGF), 368 to 388 (IAVT…MALL), 393 to 413 (MALV…FFSA), and 415 to 435 (IIKV…SFTV).

This sequence belongs to the HAK/KUP transporter (TC 2.A.72) family.

The protein resides in the cell inner membrane. It carries out the reaction K(+)(in) + H(+)(in) = K(+)(out) + H(+)(out). Functionally, transport of potassium into the cell. Likely operates as a K(+):H(+) symporter. The chain is Probable potassium transport system protein Kup 2 from Rhodopseudomonas palustris (strain BisB5).